Here is a 156-residue protein sequence, read N- to C-terminus: MPRRRGIGHRKILSDPKFSSEMVAKLINIIMVDGKKSIAEEIVYQALTMLAKKIGKPELEVLELALENVRPTVEVKSRRVGGSTYQVPIEVRPVRRHALAMRWIVHSARKRIDKSMIIRLSNELSDAIENKGSAVKKREDVHRMAEANKAFAHYRW.

The protein belongs to the universal ribosomal protein uS7 family. Part of the 30S ribosomal subunit. Contacts proteins S9 and S11.

Its function is as follows. One of the primary rRNA binding proteins, it binds directly to 16S rRNA where it nucleates assembly of the head domain of the 30S subunit. Is located at the subunit interface close to the decoding center, probably blocks exit of the E-site tRNA. The sequence is that of Small ribosomal subunit protein uS7 from Buchnera aphidicola subsp. Baizongia pistaciae (strain Bp).